Consider the following 422-residue polypeptide: Platelet-activating factor acetylhydrolase (422 aa).

Residues 1-21 form the signal peptide; the sequence is MASLWVRARRVFMKSRASGFS. Ser266 (nucleophile) is an active-site residue. The Charge relay system role is filled by Asp289. N-linked (GlcNAc...) asparagine glycosylation occurs at Asn331. Catalysis depends on His345, which acts as the Charge relay system.

This sequence belongs to the AB hydrolase superfamily. Lipase family. Plasma.

The protein localises to the secreted. It localises to the extracellular space. It carries out the reaction a 1-O-alkyl-2-acetyl-sn-glycero-3-phosphocholine + H2O = a 1-O-alkyl-sn-glycero-3-phosphocholine + acetate + H(+). Modulates the action of platelet-activating factor (PAF) by hydrolyzing the sn-2 ester bond to yield the biologically inactive lyso-PAF. Has a specificity for substrates with a short residue at the sn-2 position. It is inactive against long-chain phospholipids. This chain is Platelet-activating factor acetylhydrolase (PLA2G7), found in Gallus gallus (Chicken).